We begin with the raw amino-acid sequence, 91 residues long: Acylphosphatase (91 aa).

Residues 6–91 enclose the Acylphosphatase-like domain; sequence CMRCYISGRV…WEDYISFDVL (86 aa). Residues Arg-21 and Asn-39 contribute to the active site.

This sequence belongs to the acylphosphatase family.

The catalysed reaction is an acyl phosphate + H2O = a carboxylate + phosphate + H(+). This Legionella pneumophila subsp. pneumophila (strain Philadelphia 1 / ATCC 33152 / DSM 7513) protein is Acylphosphatase (acyP).